Here is a 426-residue protein sequence, read N- to C-terminus: MSERFLVTGGNRLVGEVAVGGAKNSVLKLMAAALLAEGTTTITNCPDILDVPLMAEVLRGLGCEVTITDDAPGDRSVVTITTPAEPKYHADFPAVTQFRASVCVLGPLMARCKRAVVALPGGDAIGSRPLDMHQAGLRLLGATSEIEHGCVVARAEELRGARIRLDFPSVGATENILMAAVLAEGETVIDNAAREPDIVDLCNMLVQMGARISGAGTSVLTIQGVERLHPTEHRVIGDRIVAATWGIAAAMTMGDVRVTGVNPKHLALVLDKLRSAGARISFDVDGFRVVQPDRPRAVNFSTLPFPGFPTDLQPMAIGLAAIADGTSMITENIFEARFRFVEEMIRLGADARTDGHHAVVRGIPRLSSAPVWSSDIRAGAGLVLAGLVADGTTEVHDVFHIDRGYPNFVEQLQSLGGLVERVGGAE.

Phosphoenolpyruvate is bound at residue 23-24 (KN). Position 99 (arginine 99) interacts with UDP-N-acetyl-alpha-D-glucosamine. Residue aspartate 123 is the Proton donor of the active site. The UDP-N-acetyl-alpha-D-glucosamine site is built by aspartate 311 and isoleucine 333.

The protein belongs to the EPSP synthase family. MurA subfamily.

It is found in the cytoplasm. The catalysed reaction is phosphoenolpyruvate + UDP-N-acetyl-alpha-D-glucosamine = UDP-N-acetyl-3-O-(1-carboxyvinyl)-alpha-D-glucosamine + phosphate. Its pathway is cell wall biogenesis; peptidoglycan biosynthesis. Cell wall formation. Adds enolpyruvyl to UDP-N-acetylglucosamine. The polypeptide is UDP-N-acetylglucosamine 1-carboxyvinyltransferase (Nocardia farcinica (strain IFM 10152)).